The chain runs to 164 residues: UPF0114 protein YqhA (164 aa).

3 consecutive transmembrane segments (helical) span residues 15–35 (LLAPVYFGLSLALIALALKFF), 53–73 (LILVLLSLVDMTLVGGLLVMV), and 136–156 (LMWYVIIHLTFVLSAFVMGYL).

The protein belongs to the UPF0114 family.

The protein resides in the cell membrane. This is UPF0114 protein YqhA from Salmonella dublin (strain CT_02021853).